Consider the following 461-residue polypeptide: Serine/threonine-protein kinase 4 homolog A (461 aa).

Positions 20–273 (FTIVEKLGEG…AEELLKHPFI (254 aa)) constitute a Protein kinase domain. ATP is bound by residues 26-34 (LGEGSYGSV) and lysine 49. Catalysis depends on aspartate 139, which acts as the Proton acceptor. Threonine 173 is subject to Phosphothreonine; by autocatalysis. Disordered regions lie at residues 303 to 349 (GIEQ…EEYD) and 369 to 388 (NDDEDSGTMKLKNTMPSNKK). Over residues 307–322 (RDEEEEDEDEDSEDSD) the composition is skewed to acidic residues. Residues 411–458 (SDKYSSYSLEELKKMLAELEIEREKEVQKTLEKFSINRQALLAVIDEK) enclose the SARAH domain.

It belongs to the protein kinase superfamily. STE Ser/Thr protein kinase family. STE20 subfamily. It depends on Mn(2+) as a cofactor. Undergoes autophosphorylation in the catalytic domain.

It is found in the cytoplasm. Its subcellular location is the cytosol. The enzyme catalyses L-seryl-[protein] + ATP = O-phospho-L-seryl-[protein] + ADP + H(+). It catalyses the reaction L-threonyl-[protein] + ATP = O-phospho-L-threonyl-[protein] + ADP + H(+). Regulates both cAMP signaling during early development and the stress response. Functions as an activator of adenylylcyclase. In Dictyostelium discoideum (Social amoeba), this protein is Serine/threonine-protein kinase 4 homolog A (krsA).